Reading from the N-terminus, the 179-residue chain is ATP synthase subunit b, chloroplastic (179 aa).

Residues 35 to 51 form a helical membrane-spanning segment; that stretch reads IVILGGGIFKLGSTALS.

This sequence belongs to the ATPase B chain family. As to quaternary structure, F-type ATPases have 2 components, F(1) - the catalytic core - and F(0) - the membrane proton channel. F(1) has five subunits: alpha(3), beta(3), gamma(1), delta(1), epsilon(1). F(0) has four main subunits: a(1), b(1), b'(1) and c(10-14). The alpha and beta chains form an alternating ring which encloses part of the gamma chain. F(1) is attached to F(0) by a central stalk formed by the gamma and epsilon chains, while a peripheral stalk is formed by the delta, b and b' chains.

It localises to the plastid. The protein resides in the chloroplast thylakoid membrane. Functionally, f(1)F(0) ATP synthase produces ATP from ADP in the presence of a proton or sodium gradient. F-type ATPases consist of two structural domains, F(1) containing the extramembraneous catalytic core and F(0) containing the membrane proton channel, linked together by a central stalk and a peripheral stalk. During catalysis, ATP synthesis in the catalytic domain of F(1) is coupled via a rotary mechanism of the central stalk subunits to proton translocation. Its function is as follows. Component of the F(0) channel, it forms part of the peripheral stalk, linking F(1) to F(0). This Emiliania huxleyi (Coccolithophore) protein is ATP synthase subunit b, chloroplastic.